Here is an 86-residue protein sequence, read N- to C-terminus: Small muscular protein (86 aa).

A disordered region spans residues 20–64; the sequence is MGAFRPGAGQPPRRKECTPEVEEGVPPTSDEEKKPIPGAKKLPGP.

This sequence belongs to the SMPX family.

In terms of biological role, plays a role in the regulatory network through which muscle cells coordinate their structural and functional states during growth, adaptation, and repair. The protein is Small muscular protein (SMPX) of Pongo abelii (Sumatran orangutan).